A 350-amino-acid polypeptide reads, in one-letter code: Leucine-rich repeat-containing protein 58 (350 aa).

LRR repeat units lie at residues 14–34 (NLTHLGLENLNLELVSENKRK), 35–56 (DVQQILLPHNRLVVLPPLVASF), 58–80 (HLHLLDISNNNMVYIGEEILGLT), 81–102 (KLKTLLAKNNRLDEFSFPKEMG), 105–125 (RLEVLNLSGNRFEEIPDQFLQ), 128–149 (TLKSLSLGGNRLKSIPAEIENL), 151–173 (SLEFLYLGGNFISSIPSELANLP), 174–195 (YLSYLVLCDNRIQSIPPQLAQV), 197–218 (SLRSLSLHNNLLTYLPREILSL), and 220–240 (HLHELSLRGNPLVVRFVRDLT).

The chain is Leucine-rich repeat-containing protein 58 (lrrc58) from Xenopus laevis (African clawed frog).